A 141-amino-acid chain; its full sequence is Nucleoside diphosphate kinase (141 aa).

ATP contacts are provided by lysine 9, phenylalanine 57, arginine 85, threonine 91, arginine 102, and asparagine 112. The Pros-phosphohistidine intermediate role is filled by histidine 115.

This sequence belongs to the NDK family. Homotetramer. Mg(2+) is required as a cofactor.

The protein resides in the cytoplasm. It catalyses the reaction a 2'-deoxyribonucleoside 5'-diphosphate + ATP = a 2'-deoxyribonucleoside 5'-triphosphate + ADP. The enzyme catalyses a ribonucleoside 5'-diphosphate + ATP = a ribonucleoside 5'-triphosphate + ADP. Functionally, major role in the synthesis of nucleoside triphosphates other than ATP. The ATP gamma phosphate is transferred to the NDP beta phosphate via a ping-pong mechanism, using a phosphorylated active-site intermediate. This is Nucleoside diphosphate kinase from Chlamydia abortus (strain DSM 27085 / S26/3) (Chlamydophila abortus).